Here is a 326-residue protein sequence, read N- to C-terminus: Tetraacyldisaccharide 4'-kinase (326 aa).

ATP is bound at residue 54 to 61; sequence SVGGTGKT.

The protein belongs to the LpxK family.

The enzyme catalyses a lipid A disaccharide + ATP = a lipid IVA + ADP + H(+). Its pathway is glycolipid biosynthesis; lipid IV(A) biosynthesis; lipid IV(A) from (3R)-3-hydroxytetradecanoyl-[acyl-carrier-protein] and UDP-N-acetyl-alpha-D-glucosamine: step 6/6. Functionally, transfers the gamma-phosphate of ATP to the 4'-position of a tetraacyldisaccharide 1-phosphate intermediate (termed DS-1-P) to form tetraacyldisaccharide 1,4'-bis-phosphate (lipid IVA). The chain is Tetraacyldisaccharide 4'-kinase from Rickettsia canadensis (strain McKiel).